The following is a 506-amino-acid chain: ATP synthase subunit alpha (506 aa).

ATP is bound at residue 170–177 (GDRQTGKT).

Belongs to the ATPase alpha/beta chains family. In terms of assembly, F-type ATPases have 2 components, CF(1) - the catalytic core - and CF(0) - the membrane proton channel. CF(1) has five subunits: alpha(3), beta(3), gamma(1), delta(1), epsilon(1). CF(0) has four main subunits: a(1), b(1), b'(1) and c(9-12).

It is found in the cellular thylakoid membrane. The catalysed reaction is ATP + H2O + 4 H(+)(in) = ADP + phosphate + 5 H(+)(out). Its function is as follows. Produces ATP from ADP in the presence of a proton gradient across the membrane. The alpha chain is a regulatory subunit. In Parasynechococcus marenigrum (strain WH8102), this protein is ATP synthase subunit alpha.